The sequence spans 156 residues: 6,7-dimethyl-8-ribityllumazine synthase (156 aa).

5-amino-6-(D-ribitylamino)uracil contacts are provided by residues phenylalanine 22, 57–59 (AYE), and 81–83 (TVI). Residue 86-87 (GT) coordinates (2S)-2-hydroxy-3-oxobutyl phosphate. Histidine 89 serves as the catalytic Proton donor. Phenylalanine 114 lines the 5-amino-6-(D-ribitylamino)uracil pocket. Residue arginine 128 coordinates (2S)-2-hydroxy-3-oxobutyl phosphate.

Belongs to the DMRL synthase family. As to quaternary structure, forms an icosahedral capsid composed of 60 subunits, arranged as a dodecamer of pentamers.

It catalyses the reaction (2S)-2-hydroxy-3-oxobutyl phosphate + 5-amino-6-(D-ribitylamino)uracil = 6,7-dimethyl-8-(1-D-ribityl)lumazine + phosphate + 2 H2O + H(+). It participates in cofactor biosynthesis; riboflavin biosynthesis; riboflavin from 2-hydroxy-3-oxobutyl phosphate and 5-amino-6-(D-ribitylamino)uracil: step 1/2. In terms of biological role, catalyzes the formation of 6,7-dimethyl-8-ribityllumazine by condensation of 5-amino-6-(D-ribitylamino)uracil with 3,4-dihydroxy-2-butanone 4-phosphate. This is the penultimate step in the biosynthesis of riboflavin. The protein is 6,7-dimethyl-8-ribityllumazine synthase of Cronobacter sakazakii (strain ATCC BAA-894) (Enterobacter sakazakii).